We begin with the raw amino-acid sequence, 563 residues long: Chitinase A (563 aa).

Residues 1–23 form the signal peptide; it reads MRKFNKPLLALLIGSTLCSAAQA. Positions 158-559 constitute a GH18 domain; the sequence is KVVGSYFVEW…NSMNASLGNS (402 aa). The active-site Proton donor is Glu-315.

It belongs to the glycosyl hydrolase 18 family. Chitinase class II subfamily.

The catalysed reaction is Random endo-hydrolysis of N-acetyl-beta-D-glucosaminide (1-&gt;4)-beta-linkages in chitin and chitodextrins.. The protein is Chitinase A (chiA) of Serratia marcescens.